A 112-amino-acid chain; its full sequence is Cell cycle protein GpsB (112 aa).

A coiled-coil region spans residues 38–72 (IKDYEAFHKEFEQLKQQNARLKRELEEQKLVATQV).

This sequence belongs to the GpsB family. Forms polymers through the coiled coil domains. Interacts with PBP1, MreC and EzrA.

The protein localises to the cytoplasm. In terms of biological role, divisome component that associates with the complex late in its assembly, after the Z-ring is formed, and is dependent on DivIC and PBP2B for its recruitment to the divisome. Together with EzrA, is a key component of the system that regulates PBP1 localization during cell cycle progression. Its main role could be the removal of PBP1 from the cell pole after pole maturation is completed. Also contributes to the recruitment of PBP1 to the division complex. Not essential for septum formation. This is Cell cycle protein GpsB from Bacillus cereus (strain ZK / E33L).